The chain runs to 116 residues: Putative membrane protein (116 aa).

Residues 13-33 traverse the membrane as a helical segment; sequence VISIITFILVIAIFVIEIVSC.

Its subcellular location is the host membrane. This Alethinophid 1 reptarenavirus (isolate AlRrV1/Boa/USA/BC/2009) (Golden Gate virus) protein is Putative membrane protein.